Here is a 1406-residue protein sequence, read N- to C-terminus: DNA-directed RNA polymerase subunit beta' (1406 aa).

Zn(2+) is bound by residues cysteine 70, cysteine 72, cysteine 85, and cysteine 88. 3 residues coordinate Mg(2+): aspartate 460, aspartate 462, and aspartate 464. Zn(2+) contacts are provided by cysteine 814, cysteine 889, cysteine 896, and cysteine 899.

This sequence belongs to the RNA polymerase beta' chain family. In terms of assembly, the RNAP catalytic core consists of 2 alpha, 1 beta, 1 beta' and 1 omega subunit. When a sigma factor is associated with the core the holoenzyme is formed, which can initiate transcription. It depends on Mg(2+) as a cofactor. Zn(2+) serves as cofactor.

The catalysed reaction is RNA(n) + a ribonucleoside 5'-triphosphate = RNA(n+1) + diphosphate. Functionally, DNA-dependent RNA polymerase catalyzes the transcription of DNA into RNA using the four ribonucleoside triphosphates as substrates. The protein is DNA-directed RNA polymerase subunit beta' of Psychromonas ingrahamii (strain DSM 17664 / CCUG 51855 / 37).